The sequence spans 923 residues: Ubiquitin carboxyl-terminal hydrolase 10 (923 aa).

The 116-residue stretch at 19–134 (FTPEEEKRIV…GGPPIERKLI (116 aa)) folds into the DUSP domain. The segment at 65-91 (NECSTGESSEAPRPGPIDNHDIIESDS) is disordered. The 592-residue stretch at 304–895 (AGLSNLGNTC…AAYVLFYRRV (592 aa)) folds into the USP domain. The active-site Nucleophile is the Cys-313. His-853 (proton acceptor) is an active-site residue.

It belongs to the peptidase C19 family.

The enzyme catalyses Thiol-dependent hydrolysis of ester, thioester, amide, peptide and isopeptide bonds formed by the C-terminal Gly of ubiquitin (a 76-residue protein attached to proteins as an intracellular targeting signal).. In terms of biological role, recognizes and hydrolyzes the peptide bond at the C-terminal Gly of ubiquitin. Involved in the processing of poly-ubiquitin precursors as well as that of ubiquitinated proteins. This Arabidopsis thaliana (Mouse-ear cress) protein is Ubiquitin carboxyl-terminal hydrolase 10 (UBP10).